The primary structure comprises 242 residues: Tyrosine recombinase XerD-like (242 aa).

Positions 1-71 (MKEAIDQFIQ…AVNQFLYFLY (71 aa)) constitute a Core-binding (CB) domain. One can recognise a Tyr recombinase domain in the interval 90 to 242 (ENSSQGSLLD…KSITTLEKYR (153 aa)). Active-site residues include Lys148 and Arg209. Catalysis depends on Tyr241, which acts as the O-(3'-phospho-DNA)-tyrosine intermediate.

It belongs to the 'phage' integrase family. XerD-like subfamily.

Its subcellular location is the cytoplasm. Putative tyrosine recombinase. Not involved in the cutting and rejoining of the recombining DNA molecules on dif(SL) site. This Streptococcus gordonii (strain Challis / ATCC 35105 / BCRC 15272 / CH1 / DL1 / V288) protein is Tyrosine recombinase XerD-like.